A 355-amino-acid polypeptide reads, in one-letter code: Guanine nucleotide-binding protein G(i) subunit alpha-2 (355 aa).

Residue Gly-2 is the site of N-myristoyl glycine attachment. Cys-3 carries the S-palmitoyl cysteine lipid modification. In terms of domain architecture, G-alpha spans 32–355 (REVKLLLLGA…KNNLKDCGLF (324 aa)). The interval 35-48 (KLLLLGAGESGKST) is G1 motif. Residues 40–47 (GAGESGKS), 176–182 (LRTRVKT), 201–205 (DVGGQ), 270–273 (NKKD), and Ala-327 each bind GTP. The Mg(2+) site is built by Ser-47 and Thr-182. Positions 174 to 182 (DVLRTRVKT) are G2 motif. The segment at 197–206 (FKMFDVGGQR) is G3 motif. Residues 266–273 (ILFLNKKD) form a G4 motif region. A G5 motif region spans residues 325–330 (TCATDT).

It belongs to the G-alpha family. G(i/o/t/z) subfamily. In terms of assembly, g proteins are composed of 3 units; alpha, beta and gamma. The alpha chain contains the guanine nucleotide binding site. In this context, interacts with GNB2. Interacts with UNC5B. Interacts with GPSM1. Interacts with RGS12 and RGS14. Interacts (inactive GDP-bound form) with NUCB1 (via GBA motif); the interaction leads to activation of GNAI3. Interacts (inactive GDP-bound form) with CCDC88C/DAPLE (via GBA motif). Interacts (inactive GDP-bound form) with CCDC8A/GIV (via GBA motif). Interacts with CXCR1 and CXCR2.

Its subcellular location is the cytoplasm. It is found in the cytoskeleton. The protein localises to the microtubule organizing center. It localises to the centrosome. The protein resides in the cell membrane. Its subcellular location is the membrane. In terms of biological role, guanine nucleotide-binding proteins (G proteins) are involved as modulators or transducers in various transmembrane signaling systems. The G(i) proteins are involved in hormonal regulation of adenylate cyclase: they inhibit the cyclase in response to beta-adrenergic stimuli. May play a role in cell division. The sequence is that of Guanine nucleotide-binding protein G(i) subunit alpha-2 (GNAI2) from Canis lupus familiaris (Dog).